Consider the following 432-residue polypeptide: MSAEGQEELLDYSDSEEIAVPSNAPEAGADGADKDADKKGSYVGIHATGFRDFLLKPELLRAIGDCGFEHPSEVQQVCIPQSILGTDVLCQAKSGLGKTAVFVLSTLQQLDPVPGEITTLVICHTRELAYQIRNEYARFSKYMPDVKTEVFYGGIPIAKDIEKLKNKDTCPHIVVATPGRLHALVEEKAIRLNNVKSFVIDECDKVLEAIDMRRDVQDIFRNTPHQKQVMMFSATLSQEIRPVCKKFMQNPLEIYVDDEAKLTLHGLQQYYLKLDEKEKNRKLADLLDSLEFNQVIIFVKSTSRANELNKLLVASNFPSIAVHSAMPQEERIARYKSFKEFNKRICVSTDVFGRGIDIERINLAINYDLPNEADQYLHRVGRAGRFGTKGLAISFVGSKEDEEVLEKIQSRFDVKITEFPEEGVDSSTYMNT.

Residues 1 to 17 (MSAEGQEELLDYSDSEE) show a composition bias toward acidic residues. A disordered region spans residues 1–35 (MSAEGQEELLDYSDSEEIAVPSNAPEAGADGADKD). The short motif at 48 to 76 (TGFRDFLLKPELLRAIGDCGFEHPSEVQQ) is the Q motif element. The Helicase ATP-binding domain maps to 79-254 (IPQSILGTDV…KKFMQNPLEI (176 aa)). 92-99 (AKSGLGKT) is a binding site for ATP. Residues 201–204 (DECD) carry the DEAD box motif. A Helicase C-terminal domain is found at 266-427 (GLQQYYLKLD…EFPEEGVDSS (162 aa)).

It belongs to the DEAD box helicase family. DECD subfamily.

The protein localises to the nucleus. The catalysed reaction is ATP + H2O = ADP + phosphate + H(+). In terms of biological role, ATP-binding RNA helicase involved in transcription elongation and required for the export of mRNA out of the nucleus. SUB2 also plays a role in pre-mRNA splicing and spliceosome assembly. May be involved in rDNA and telomeric silencing, and maintenance of genome integrity. In Meyerozyma guilliermondii (strain ATCC 6260 / CBS 566 / DSM 6381 / JCM 1539 / NBRC 10279 / NRRL Y-324) (Yeast), this protein is ATP-dependent RNA helicase SUB2 (SUB2).